The chain runs to 363 residues: MSIEINNISKYFGRTKVLNDITLDIPSGQMVALLGPSGSGKTTLLRIIAGLENQNAGRLSFHGTDVSRLHARDRRVGFVFQHYALFRHMTVFDNIAFGLTVLPRRERPNAAAIKQKVGQLLEMVQLGHLAERFPSQLSGGQKQRVALARALAVEPQILLLDEPFGALDAQVRKELRRWLRQLHEELKFTSVFVTHDQEEAMEVADRVVVMSQGNIEQVGTPDEVWREPATRFVLEFLGEVNRLSGEIRGSQLFIGAHHWPLDLAPMHQGSVDLFLRPWEMEVSTQSSDRCPLPVQVLEVSPRGHFWQLTVQPIGWHQDPISVVLPEGNIDAPVRGNRYYVGGLNARLYSGNQLLQPIALAQSA.

The ABC transporter domain occupies 3-237 (IEINNISKYF…PATRFVLEFL (235 aa)). 35–42 (GPSGSGKT) lines the ATP pocket.

This sequence belongs to the ABC transporter superfamily. Sulfate/tungstate importer (TC 3.A.1.6) family. In terms of assembly, the complex is composed of two ATP-binding proteins (CysA), two transmembrane proteins (CysT and CysW) and a solute-binding protein (CysP).

It is found in the cell inner membrane. The enzyme catalyses sulfate(out) + ATP + H2O = sulfate(in) + ADP + phosphate + H(+). It carries out the reaction thiosulfate(out) + ATP + H2O = thiosulfate(in) + ADP + phosphate + H(+). Functionally, part of the ABC transporter complex CysAWTP involved in sulfate/thiosulfate import. Responsible for energy coupling to the transport system. The polypeptide is Sulfate/thiosulfate import ATP-binding protein CysA (Yersinia pseudotuberculosis serotype I (strain IP32953)).